A 211-amino-acid polypeptide reads, in one-letter code: MIKVGILGPVGSGKTSLIEFLAKEYSERGIKVGILTNDVVSAYDAMRIYHNLVERLRILPRENVLGLVTGGCPHTAIREDPSLNLRALETLEERANPDLVFIESGGDNVMSTFSSSLADFTIFVLDTSAGDKYPGKGGIGITESDLLVVNKIDLAPYVQADLNKMREDSLRVRRGKPSVFISLKTGEGTRELIRILDEELGLERVFGNKGQ.

8–15 (GPVGSGKT) contributes to the GTP binding site.

This sequence belongs to the SIMIBI class G3E GTPase family. UreG subfamily. Homodimer. UreD, UreF and UreG form a complex that acts as a GTP-hydrolysis-dependent molecular chaperone, activating the urease apoprotein by helping to assemble the nickel containing metallocenter of UreC. The UreE protein probably delivers the nickel.

It is found in the cytoplasm. Functionally, facilitates the functional incorporation of the urease nickel metallocenter. This process requires GTP hydrolysis, probably effectuated by UreG. This chain is Urease accessory protein UreG, found in Metallosphaera sedula (strain ATCC 51363 / DSM 5348 / JCM 9185 / NBRC 15509 / TH2).